Consider the following 305-residue polypeptide: Orotidine 5'-phosphate decarboxylase (305 aa).

Lys108 (proton donor) is an active-site residue.

Belongs to the OMP decarboxylase family. Type 2 subfamily.

The catalysed reaction is orotidine 5'-phosphate + H(+) = UMP + CO2. The protein operates within pyrimidine metabolism; UMP biosynthesis via de novo pathway; UMP from orotate: step 2/2. This Caldicellulosiruptor saccharolyticus (strain ATCC 43494 / DSM 8903 / Tp8T 6331) protein is Orotidine 5'-phosphate decarboxylase.